Consider the following 488-residue polypeptide: Ribulose bisphosphate carboxylase large chain (488 aa).

Substrate contacts are provided by Asn127 and Thr177. The active-site Proton acceptor is the Lys179. Residue Lys181 coordinates substrate. Residues Lys205, Asp207, and Glu208 each contribute to the Mg(2+) site. Lys205 bears the N6-carboxylysine mark. The active-site Proton acceptor is His297. Substrate contacts are provided by Arg298, His330, and Ser382.

The protein belongs to the RuBisCO large chain family. Type I subfamily. Heterohexadecamer of 8 large chains and 8 small chains. The cofactor is Mg(2+).

It is found in the plastid. It localises to the chloroplast. It catalyses the reaction 2 (2R)-3-phosphoglycerate + 2 H(+) = D-ribulose 1,5-bisphosphate + CO2 + H2O. The enzyme catalyses D-ribulose 1,5-bisphosphate + O2 = 2-phosphoglycolate + (2R)-3-phosphoglycerate + 2 H(+). In terms of biological role, ruBisCO catalyzes two reactions: the carboxylation of D-ribulose 1,5-bisphosphate, the primary event in carbon dioxide fixation, as well as the oxidative fragmentation of the pentose substrate in the photorespiration process. Both reactions occur simultaneously and in competition at the same active site. This is Ribulose bisphosphate carboxylase large chain from Cyanidium caldarium (Red alga).